We begin with the raw amino-acid sequence, 197 residues long: V-type ATP synthase subunit E 2 (197 aa).

This sequence belongs to the V-ATPase E subunit family.

Functionally, produces ATP from ADP in the presence of a proton gradient across the membrane. This Clostridium tetani (strain Massachusetts / E88) protein is V-type ATP synthase subunit E 2.